Reading from the N-terminus, the 185-residue chain is Ribosome-recycling factor (185 aa).

This sequence belongs to the RRF family.

It is found in the cytoplasm. Its function is as follows. Responsible for the release of ribosomes from messenger RNA at the termination of protein biosynthesis. May increase the efficiency of translation by recycling ribosomes from one round of translation to another. In Desulfatibacillum aliphaticivorans, this protein is Ribosome-recycling factor.